A 660-amino-acid chain; its full sequence is DNA topoisomerase I, plasmid (660 aa).

Residues 1–110 (MKLMIIESPG…LRVTFNEITA (110 aa)) form the Toprim domain. 2 residues coordinate Mg(2+): glutamate 7 and aspartate 79. Residues 124–550 (DVKRVAAQEA…KVHDQLNMEL (427 aa)) form the Topo IA-type catalytic domain. Residues 158-163 (SAGRVQ) are interaction with DNA. Residue tyrosine 287 is the O-(5'-phospho-DNA)-tyrosine intermediate of the active site. 2 consecutive C4-type zinc fingers follow at residues 563–589 (CQECGKPLRRIPGKNGHFWGCSGYPDC) and 613–643 (CVKCGNPLKHLVKKGKGGYDFWGCSGFKEGC).

It belongs to the type IA topoisomerase family. In terms of assembly, monomer. It depends on Mg(2+) as a cofactor.

It carries out the reaction ATP-independent breakage of single-stranded DNA, followed by passage and rejoining.. Functionally, releases the supercoiling and torsional tension of DNA, which is introduced during the DNA replication and transcription, by transiently cleaving and rejoining one strand of the DNA duplex. Introduces a single-strand break via transesterification at a target site in duplex DNA. The scissile phosphodiester is attacked by the catalytic tyrosine of the enzyme, resulting in the formation of a DNA-(5'-phosphotyrosyl)-enzyme intermediate and the expulsion of a 3'-OH DNA strand. The free DNA strand then undergoes passage around the unbroken strand, thus removing DNA supercoils. Finally, in the religation step, the DNA 3'-OH attacks the covalent intermediate to expel the active-site tyrosine and restore the DNA phosphodiester backbone. This is DNA topoisomerase I, plasmid from Xylella fastidiosa (strain 9a5c).